The following is a 532-amino-acid chain: Copalyl diphosphate synthase (532 aa).

Residues 313–318 (DTDDTA) carry the DXDDTA motif motif. The QXXDGSW motif signature appears at 443-449 (QSDDGSW).

The protein belongs to the terpene synthase family. The cofactor is Mg(2+).

It carries out the reaction (2E,6E,10E)-geranylgeranyl diphosphate = (+)-copalyl diphosphate. In terms of biological role, involved in the biosynthesis of the mercapturic acid derivative diterpene cyslabdan A, a potentiator of the beta-lactam antibiotic imipenem. Catalyzes the conversion of geranylgeranyl diphosphate (GGDP) into (+)-copalyl diphosphate. The protein is Copalyl diphosphate synthase of Streptomyces cyslabdanicus.